We begin with the raw amino-acid sequence, 191 residues long: A-type ATP synthase subunit E (191 aa).

This sequence belongs to the V-ATPase E subunit family. As to quaternary structure, has multiple subunits with at least A(3), B(3), C, D, E, F, H, I and proteolipid K(x). In terms of processing, the N-terminus is blocked.

Its subcellular location is the cell membrane. In terms of biological role, component of the A-type ATP synthase that produces ATP from ADP in the presence of a proton gradient across the membrane. In Sulfurisphaera tokodaii (strain DSM 16993 / JCM 10545 / NBRC 100140 / 7) (Sulfolobus tokodaii), this protein is A-type ATP synthase subunit E.